The following is a 60-amino-acid chain: UPF0434 protein YcaR (60 aa).

It belongs to the UPF0434 family.

The chain is UPF0434 protein YcaR from Escherichia coli O139:H28 (strain E24377A / ETEC).